Reading from the N-terminus, the 556-residue chain is Glucose-6-phosphate isomerase (556 aa).

The active-site Proton donor is glutamate 364. Residues histidine 395 and lysine 521 contribute to the active site.

This sequence belongs to the GPI family.

Its subcellular location is the cytoplasm. It carries out the reaction alpha-D-glucose 6-phosphate = beta-D-fructose 6-phosphate. It functions in the pathway carbohydrate biosynthesis; gluconeogenesis. The protein operates within carbohydrate degradation; glycolysis; D-glyceraldehyde 3-phosphate and glycerone phosphate from D-glucose: step 2/4. Functionally, catalyzes the reversible isomerization of glucose-6-phosphate to fructose-6-phosphate. The chain is Glucose-6-phosphate isomerase from Corynebacterium kroppenstedtii (strain DSM 44385 / JCM 11950 / CIP 105744 / CCUG 35717).